Reading from the N-terminus, the 444-residue chain is Phosphoglucosamine mutase (444 aa).

The active-site Phosphoserine intermediate is the S101. Mg(2+) contacts are provided by S101, D240, D242, and D244. S101 carries the phosphoserine modification.

It belongs to the phosphohexose mutase family. Mg(2+) serves as cofactor. Activated by phosphorylation.

It carries out the reaction alpha-D-glucosamine 1-phosphate = D-glucosamine 6-phosphate. Catalyzes the conversion of glucosamine-6-phosphate to glucosamine-1-phosphate. The sequence is that of Phosphoglucosamine mutase from Photobacterium profundum (strain SS9).